The sequence spans 398 residues: Homeobox protein knotted-1-like 1 (398 aa).

3 disordered regions span residues 43-69 (TFHL…PGTH), 172-192 (EFEA…DPEL), and 234-277 (NNNA…PRAE). The span at 49-58 (SGGGGGGGSG) shows a compositional bias: gly residues. The 21-residue stretch at 280 to 300 (ELKNHLLRKYSGYLSSLKQEL) folds into the ELK domain. Positions 301 to 364 (SKKKKKGKLP…NQRKRHWKPS (64 aa)) form a DNA-binding region, homeobox; TALE-type.

It belongs to the TALE/KNOX homeobox family. As to expression, expressed only in the stems.

The protein localises to the nucleus. Functionally, probably binds to the DNA sequence 5'-TGAC-3'. The sequence is that of Homeobox protein knotted-1-like 1 from Malus domestica (Apple).